Here is a 348-residue protein sequence, read N- to C-terminus: Dihydroorotase (348 aa).

Positions 17 and 19 each coordinate Zn(2+). Substrate-binding positions include 19-21 and asparagine 45; that span reads HLR. Zn(2+)-binding residues include lysine 103, histidine 140, and histidine 178. Lysine 103 carries the post-translational modification N6-carboxylysine. Histidine 140 serves as a coordination point for substrate. Leucine 223 contributes to the substrate binding site. Aspartate 251 serves as a coordination point for Zn(2+). Aspartate 251 is a catalytic residue. Residues histidine 255 and alanine 267 each coordinate substrate.

Belongs to the metallo-dependent hydrolases superfamily. DHOase family. Class II DHOase subfamily. In terms of assembly, homodimer. Zn(2+) is required as a cofactor.

It carries out the reaction (S)-dihydroorotate + H2O = N-carbamoyl-L-aspartate + H(+). It participates in pyrimidine metabolism; UMP biosynthesis via de novo pathway; (S)-dihydroorotate from bicarbonate: step 3/3. Catalyzes the reversible cyclization of carbamoyl aspartate to dihydroorotate. The sequence is that of Dihydroorotase from Klebsiella pneumoniae (strain 342).